Here is a 274-residue protein sequence, read N- to C-terminus: 4-diphosphocytidyl-2-C-methyl-D-erythritol kinase (274 aa).

The active site involves lysine 14. 94-104 (PMQAGLGGGSS) contacts ATP. The active site involves aspartate 134.

This sequence belongs to the GHMP kinase family. IspE subfamily.

The enzyme catalyses 4-CDP-2-C-methyl-D-erythritol + ATP = 4-CDP-2-C-methyl-D-erythritol 2-phosphate + ADP + H(+). Its pathway is isoprenoid biosynthesis; isopentenyl diphosphate biosynthesis via DXP pathway; isopentenyl diphosphate from 1-deoxy-D-xylulose 5-phosphate: step 3/6. Functionally, catalyzes the phosphorylation of the position 2 hydroxy group of 4-diphosphocytidyl-2C-methyl-D-erythritol. The chain is 4-diphosphocytidyl-2-C-methyl-D-erythritol kinase from Thermosipho melanesiensis (strain DSM 12029 / CIP 104789 / BI429).